Consider the following 366-residue polypeptide: DNA integrity scanning protein DisA (366 aa).

The DAC domain occupies 21 to 159 (VHTLKGTLQR…EGKSHMLEQP (139 aa)). ATP-binding positions include Gly88, Leu106, and 119–123 (TRHRS).

Belongs to the DisA family. As to quaternary structure, homooctamer. Mg(2+) is required as a cofactor.

The catalysed reaction is 2 ATP = 3',3'-c-di-AMP + 2 diphosphate. Participates in a DNA-damage check-point. DisA forms globular foci that rapidly scan along the chromosomes searching for lesions. In terms of biological role, also has diadenylate cyclase activity, catalyzing the condensation of 2 ATP molecules into cyclic di-AMP (c-di-AMP). c-di-AMP likely acts as a signaling molecule that may couple DNA integrity with a cellular process. This Corynebacterium glutamicum (strain ATCC 13032 / DSM 20300 / JCM 1318 / BCRC 11384 / CCUG 27702 / LMG 3730 / NBRC 12168 / NCIMB 10025 / NRRL B-2784 / 534) protein is DNA integrity scanning protein DisA.